Consider the following 953-residue polypeptide: 2-oxoglutarate dehydrogenase E1 component (953 aa).

Belongs to the alpha-ketoglutarate dehydrogenase family. Homodimer. Part of the 2-oxoglutarate dehydrogenase (OGDH) complex composed of E1 (2-oxoglutarate dehydrogenase), E2 (dihydrolipoamide succinyltransferase) and E3 (dihydrolipoamide dehydrogenase); the complex contains multiple copies of the three enzymatic components (E1, E2 and E3). It depends on thiamine diphosphate as a cofactor.

It catalyses the reaction N(6)-[(R)-lipoyl]-L-lysyl-[protein] + 2-oxoglutarate + H(+) = N(6)-[(R)-S(8)-succinyldihydrolipoyl]-L-lysyl-[protein] + CO2. E1 component of the 2-oxoglutarate dehydrogenase (OGDH) complex which catalyzes the decarboxylation of 2-oxoglutarate, the first step in the conversion of 2-oxoglutarate to succinyl-CoA and CO(2). The chain is 2-oxoglutarate dehydrogenase E1 component from Oceanobacillus iheyensis (strain DSM 14371 / CIP 107618 / JCM 11309 / KCTC 3954 / HTE831).